A 76-amino-acid polypeptide reads, in one-letter code: Defensin-like protein 155 (76 aa).

An N-terminal signal peptide occupies residues 1–27 (MAKISCSYLLILMLALSVFSVVEKAKG). 4 disulfides stabilise this stretch: Cys31-Cys76, Cys40-Cys59, Cys45-Cys70, and Cys49-Cys72.

The protein belongs to the DEFL family.

It localises to the secreted. The polypeptide is Defensin-like protein 155 (LCR36) (Arabidopsis thaliana (Mouse-ear cress)).